The chain runs to 450 residues: Exodeoxyribonuclease 7 large subunit (450 aa).

This sequence belongs to the XseA family. Heterooligomer composed of large and small subunits.

It localises to the cytoplasm. The enzyme catalyses Exonucleolytic cleavage in either 5'- to 3'- or 3'- to 5'-direction to yield nucleoside 5'-phosphates.. Functionally, bidirectionally degrades single-stranded DNA into large acid-insoluble oligonucleotides, which are then degraded further into small acid-soluble oligonucleotides. This is Exodeoxyribonuclease 7 large subunit from Listeria monocytogenes serovar 1/2a (strain ATCC BAA-679 / EGD-e).